Consider the following 734-residue polypeptide: Photosystem I P700 chlorophyll a apoprotein A2 (734 aa).

A run of 8 helical transmembrane segments spans residues 46–69 (IFASHFGQLAIIFLWTSGNLFHVA), 135–158 (LYTGALFLLFLSAISLIAGWLHLQ), 175–199 (LNHHLSGLFGVSSLAWTGHLVHVAI), 273–291 (IAHHHLAIAFIFLVAGHMY), 330–353 (IHFQLGLALASLGVITSLVAQHMY), 369–395 (AALYTHHQYIAGFIMTGAFAHGAIFFI), 417–439 (AIKSHLSWVSLFLGFHTLGLYVH), and 517–535 (FLVHHAIALGLHTTTLILV). [4Fe-4S] cluster contacts are provided by cysteine 559 and cysteine 568. The next 2 membrane-spanning stretches (helical) occupy residues 575-596 (AFYLAVFWMLNTIGWVTFYWHW) and 643-665 (LSVWAWMFLFGHLVWATGFMFLI). Residues histidine 654, methionine 662, and tyrosine 670 each coordinate chlorophyll a. Position 671 (tryptophan 671) interacts with phylloquinone. The helical transmembrane segment at 707 to 727 (LVGLAHFSVGYIFTYAAFLIA) threads the bilayer.

The protein belongs to the PsaA/PsaB family. The PsaA/B heterodimer binds the P700 chlorophyll special pair and subsequent electron acceptors. PSI consists of a core antenna complex that captures photons, and an electron transfer chain that converts photonic excitation into a charge separation. The eukaryotic PSI reaction center is composed of at least 11 subunits. P700 is a chlorophyll a/chlorophyll a' dimer, A0 is one or more chlorophyll a, A1 is one or both phylloquinones and FX is a shared 4Fe-4S iron-sulfur center. is required as a cofactor.

It localises to the plastid. The protein localises to the chloroplast thylakoid membrane. It carries out the reaction reduced [plastocyanin] + hnu + oxidized [2Fe-2S]-[ferredoxin] = oxidized [plastocyanin] + reduced [2Fe-2S]-[ferredoxin]. In terms of biological role, psaA and PsaB bind P700, the primary electron donor of photosystem I (PSI), as well as the electron acceptors A0, A1 and FX. PSI is a plastocyanin-ferredoxin oxidoreductase, converting photonic excitation into a charge separation, which transfers an electron from the donor P700 chlorophyll pair to the spectroscopically characterized acceptors A0, A1, FX, FA and FB in turn. Oxidized P700 is reduced on the lumenal side of the thylakoid membrane by plastocyanin. This is Photosystem I P700 chlorophyll a apoprotein A2 from Liriodendron tulipifera (Tuliptree).